The sequence spans 470 residues: Calcium-binding and coiled-coil domain-containing protein 2 (470 aa).

The short motif at 131 to 134 is the CLIR element; sequence ILLV. Positions 132–368 form a coiled coil; it reads LLVTTEEEAQ…QMEDLSYTLE (237 aa). An LIR-like motif is present at residues 201–204; it reads QQNQ. Residues 441-464 form a UBZ1-type zinc finger; that stretch reads QMQCPECGSEFENFQVFQDHIFCH. Residues C444, C447, H460, and H464 each contribute to the Zn(2+) site.

Belongs to the CALCOCO family.

Its subcellular location is the cytoplasm. It localises to the perinuclear region. The protein localises to the cytoskeleton. The protein resides in the cytoplasmic vesicle. It is found in the autophagosome membrane. Functionally, xenophagy-specific receptor required for autophagy-mediated intracellular bacteria degradation. Acts as an effector protein of galectin-sensed membrane damage that restricts the proliferation of infecting pathogens upon entry into the cytosol by targeting galectin-associated bacteria for autophagy. Initially orchestrates bacteria targeting to autophagosomes and subsequently ensures pathogen degradation by regulating pathogen-containing autophagosome maturation. May play a role in ruffle formation and actin cytoskeleton organization and seems to negatively regulate constitutive secretion. This is Calcium-binding and coiled-coil domain-containing protein 2 from Xenopus tropicalis (Western clawed frog).